We begin with the raw amino-acid sequence, 201 residues long: Small ribosomal subunit protein uS10m (201 aa).

This sequence belongs to the universal ribosomal protein uS10 family. As to quaternary structure, component of the mitochondrial small ribosomal subunit (mt-SSU). Mature mammalian 55S mitochondrial ribosomes consist of a small (28S) and a large (39S) subunit. The 28S small subunit contains a 12S ribosomal RNA (12S mt-rRNA) and 30 different proteins. The 39S large subunit contains a 16S rRNA (16S mt-rRNA), a copy of mitochondrial valine transfer RNA (mt-tRNA(Val)), which plays an integral structural role, and 52 different proteins.

Its subcellular location is the mitochondrion. This Homo sapiens (Human) protein is Small ribosomal subunit protein uS10m (MRPS10).